Reading from the N-terminus, the 1079-residue chain is Eukaryotic translation initiation factor 5B (1079 aa).

The segment at 1–478 (MGKKGKKSGY…QAAPAESNVS (478 aa)) is disordered. Polar residues predominate over residues 22-38 (SGQNEYLDNTSQDSPQN). Positions 57–67 (SKKKKGKKNKG) are enriched in basic residues. A phosphoserine mark is found at S73, S77, and S82. The span at 105 to 114 (KKGKKGKKSK) shows a compositional bias: basic residues. S127 is modified (phosphoserine). Positions 160–169 (NNNESEAAAP) are enriched in low complexity. Positions 173–192 (PEVRVKTKKEKEREKKEREK) are enriched in basic and acidic residues. Basic residues predominate over residues 193-204 (LRKKQQQAKKKG). Over residues 207-233 (GEDTLASSEVSSEVDISTPAENDSSAK) the composition is skewed to polar residues. The segment covering 253-293 (MLEEKRAREEEEQRIREEEARIAEEEKRLAEVEEARKEEAR) has biased composition (basic and acidic residues). Low complexity-rich tracts occupy residues 321 to 334 (QQAL…QMLE) and 361 to 376 (RSGT…LESS). T364 is modified (phosphothreonine). The segment covering 385-408 (EPQKDSKDDSEKVEKETEVERKEE) has biased composition (basic and acidic residues). Residues 409 to 431 (NEAEAEAVFDDWEAALEEPEVAE) show a composition bias toward acidic residues. Positions 436-466 (VTEKKETDIKSDAVEHSIKDKEDSKTDKVDD) are enriched in basic and acidic residues. In terms of domain architecture, tr-type G spans 482–700 (LRSPICCILG…LISLTQTRMS (219 aa)). Positions 491 to 498 (GHVDTGKT) are G1. 491 to 498 (GHVDTGKT) is a GTP binding site. The interval 516 to 520 (GITQQ) is G2. The G3 stretch occupies residues 555-558 (DTPG). The interval 609–612 (NKVD) is G4. The segment at 677-679 (SAQ) is G5.

This sequence belongs to the TRAFAC class translation factor GTPase superfamily. Classic translation factor GTPase family. IF-2 subfamily. A monovalent cation serves as cofactor.

The protein localises to the cytoplasm. The enzyme catalyses GTP + H2O = GDP + phosphate + H(+). Functionally, plays a role in translation initiation. Translational GTPase that catalyzes the joining of the 40S and 60S subunits to form the 80S initiation complex with the initiator methionine-tRNA in the P-site base paired to the start codon. GTP binding and hydrolysis induces conformational changes in the enzyme that renders it active for productive interactions with the ribosome. The release of the enzyme after formation of the initiation complex is a prerequisite to form elongation-competent ribosomes. In Schizosaccharomyces pombe (strain 972 / ATCC 24843) (Fission yeast), this protein is Eukaryotic translation initiation factor 5B.